Here is a 1201-residue protein sequence, read N- to C-terminus: uncharacterized protein (1201 aa).

The chain crosses the membrane as a helical span at residues 140–160 (IIINLIFFFAFIIVGIYLFKP). Coiled-coil stretches lie at residues 420–459 (QKKQLIIEEQIKLINAKIQQLERKLANIEVESLKSIAELN) and 536–574 (AIKAIEKNEIQKFKKELLELEREKQEIRAQSLQVLITKM).

It localises to the cell membrane. This is an uncharacterized protein from Bacillus subtilis (strain 168).